Consider the following 332-residue polypeptide: Ubiquinone biosynthesis protein COQ4, mitochondrial (332 aa).

The N-terminal 16 residues, 1-16 (MFTVSKKSLQASRNAF), are a transit peptide targeting the mitochondrion. Residues His212, Asp213, His216, and Glu228 each coordinate Zn(2+).

This sequence belongs to the COQ4 family. As to quaternary structure, component of a multi-subunit COQ enzyme complex, composed of at least COQ3, COQ4, COQ5, COQ6, COQ7 and COQ9. The cofactor is Zn(2+).

It localises to the mitochondrion inner membrane. It catalyses the reaction a 4-hydroxy-3-methoxy-5-(all-trans-polyprenyl)benzoate + H(+) = a 2-methoxy-6-(all-trans-polyprenyl)phenol + CO2. Its pathway is cofactor biosynthesis; ubiquinone biosynthesis. Lyase that catalyzes the C1-decarboxylation of 4-hydroxy-3-methoxy-5-(all-trans-polyprenyl)benzoic acid into 2-methoxy-6-(all-trans-polyprenyl)phenol during ubiquinone biosynthesis. In Kluyveromyces lactis (strain ATCC 8585 / CBS 2359 / DSM 70799 / NBRC 1267 / NRRL Y-1140 / WM37) (Yeast), this protein is Ubiquinone biosynthesis protein COQ4, mitochondrial.